Reading from the N-terminus, the 259-residue chain is uncharacterized protein (259 aa).

Belongs to the ParA family.

This is an uncharacterized protein from Methanocaldococcus jannaschii (strain ATCC 43067 / DSM 2661 / JAL-1 / JCM 10045 / NBRC 100440) (Methanococcus jannaschii).